A 1374-amino-acid chain; its full sequence is Tripeptidyl-peptidase 2 (1374 aa).

The Peptidase S8 domain occupies 62-558 (ALLLNKTDTE…QGMIKIATAY (497 aa)). Residues D93, H314, and S499 each act as charge relay system in the active site.

Belongs to the peptidase S8 family. In terms of tissue distribution, expressed in intestinal fat-storing cells and some head neurons.

It carries out the reaction Release of an N-terminal tripeptide from a polypeptide.. Component of the proteolytic cascade acting downstream of the 26S proteasome in the ubiquitin-proteasome pathway. Has a role in regulation of fat storage. The chain is Tripeptidyl-peptidase 2 (tpp-2) from Caenorhabditis elegans.